The primary structure comprises 145 residues: Putative transcriptional regulatory protein PYRAB13000 (145 aa).

Belongs to the Tfx family.

Putative transcriptional regulator. The polypeptide is Putative transcriptional regulatory protein PYRAB13000 (Pyrococcus abyssi (strain GE5 / Orsay)).